The following is a 342-amino-acid chain: Dihydroorotase (342 aa).

Residues H13 and H15 each contribute to the Zn(2+) site. Substrate-binding positions include 15–17 (HLR) and N41. 3 residues coordinate Zn(2+): K98, H135, and H173. An N6-carboxylysine modification is found at K98. H135 contacts substrate. L218 contributes to the substrate binding site. Residue D246 participates in Zn(2+) binding. The active site involves D246. Residues H250 and A262 each contribute to the substrate site.

The protein belongs to the metallo-dependent hydrolases superfamily. DHOase family. Class II DHOase subfamily. In terms of assembly, homodimer. Zn(2+) serves as cofactor.

The enzyme catalyses (S)-dihydroorotate + H2O = N-carbamoyl-L-aspartate + H(+). It participates in pyrimidine metabolism; UMP biosynthesis via de novo pathway; (S)-dihydroorotate from bicarbonate: step 3/3. Functionally, catalyzes the reversible cyclization of carbamoyl aspartate to dihydroorotate. The chain is Dihydroorotase from Vibrio cholerae serotype O1 (strain ATCC 39315 / El Tor Inaba N16961).